The primary structure comprises 1246 residues: Putative helicase L115 (1246 aa).

A disordered region spans residues 1-21; sequence MSKTITKKVNKKTKKSTKINP. Residues 872 to 1030 enclose the Helicase ATP-binding domain; it reads AKFTDGYHGF…YYMLKMLQTG (159 aa). 885–892 serves as a coordination point for ATP; it reads SDVGSGKT.

In Acanthamoeba polyphaga (Amoeba), this protein is Putative helicase L115.